We begin with the raw amino-acid sequence, 430 residues long: Tol-Pal system protein TolB (430 aa).

Residues 1–21 (MKQAFRVALGFLVLWASVLHA) form the signal peptide.

The protein belongs to the TolB family. In terms of assembly, the Tol-Pal system is composed of five core proteins: the inner membrane proteins TolA, TolQ and TolR, the periplasmic protein TolB and the outer membrane protein Pal. They form a network linking the inner and outer membranes and the peptidoglycan layer.

The protein localises to the periplasm. Its function is as follows. Part of the Tol-Pal system, which plays a role in outer membrane invagination during cell division and is important for maintaining outer membrane integrity. TolB occupies a key intermediary position in the Tol-Pal system because it communicates directly with both membrane-embedded components, Pal in the outer membrane and TolA in the inner membrane. This chain is Tol-Pal system protein TolB, found in Yersinia enterocolitica serotype O:8 / biotype 1B (strain NCTC 13174 / 8081).